The chain runs to 358 residues: Serine/threonine-protein phosphatase 2A activator 2 (358 aa).

This sequence belongs to the PTPA-type PPIase family.

It localises to the cytoplasm. It catalyses the reaction [protein]-peptidylproline (omega=180) = [protein]-peptidylproline (omega=0). Functionally, PPIases accelerate the folding of proteins. It catalyzes the cis-trans isomerization of proline imidic peptide bonds in oligopeptides. Acts as a regulatory subunit for PP2A-like phosphatases modulating their activity or substrate specificity, probably by inducing a conformational change in the catalytic subunit, a direct target of the PPIase. Can reactivate inactive phosphatase PP2A-phosphatase methylesterase complexes (PP2Ai) in presence of ATP and Mg(2+) by dissociating the inactive form from the complex. The sequence is that of Serine/threonine-protein phosphatase 2A activator 2 (RRD2) from Candida glabrata (strain ATCC 2001 / BCRC 20586 / JCM 3761 / NBRC 0622 / NRRL Y-65 / CBS 138) (Yeast).